The chain runs to 553 residues: Glucose-6-phosphate isomerase (553 aa).

D-glucose 6-phosphate is bound by residues Gly164–Ser165, Ser215–Thr220, Gln359, Glu363, His394, and Lys516. The active-site Proton donor is the Glu363. Residues His394 and Lys516 contribute to the active site.

Belongs to the GPI family. Homodimer.

The protein localises to the cytoplasm. Its subcellular location is the cytosol. It carries out the reaction alpha-D-glucose 6-phosphate = beta-D-fructose 6-phosphate. The protein operates within carbohydrate degradation; glycolysis; D-glyceraldehyde 3-phosphate and glycerone phosphate from D-glucose: step 2/4. In the cytoplasm, catalyzes the conversion of glucose-6-phosphate to fructose-6-phosphate, the second step in glycolysis, and the reverse reaction during gluconeogenesis. The sequence is that of Glucose-6-phosphate isomerase (pgiA) from Aspergillus oryzae (strain ATCC 42149 / RIB 40) (Yellow koji mold).